Here is a 382-residue protein sequence, read N- to C-terminus: Lipid-A-disaccharide synthase (382 aa).

The protein belongs to the LpxB family.

The catalysed reaction is 2-N,3-O-bis[(3R)-3-hydroxytetradecanoyl]-alpha-D-glucosaminyl 1-phosphate + UDP-2-N,3-O-bis[(3R)-3-hydroxytetradecanoyl]-alpha-D-glucosamine = lipid A disaccharide (E. coli) + UDP + H(+). It catalyses the reaction a lipid X + a UDP-2-N,3-O-bis[(3R)-3-hydroxyacyl]-alpha-D-glucosamine = a lipid A disaccharide + UDP + H(+). Its pathway is glycolipid biosynthesis; lipid IV(A) biosynthesis; lipid IV(A) from (3R)-3-hydroxytetradecanoyl-[acyl-carrier-protein] and UDP-N-acetyl-alpha-D-glucosamine: step 5/6. Functionally, condensation of UDP-2,3-diacylglucosamine and 2,3-diacylglucosamine-1-phosphate to form lipid A disaccharide, a precursor of lipid A, a phosphorylated glycolipid that anchors the lipopolysaccharide to the outer membrane of the cell. The protein is Lipid-A-disaccharide synthase of Escherichia coli O8 (strain IAI1).